Reading from the N-terminus, the 460-residue chain is Cysteine--tRNA ligase (460 aa).

Cys-29 is a Zn(2+) binding site. The short motif at 31 to 41 is the 'HIGH' region element; sequence ATPQSSPHIGH. Zn(2+) contacts are provided by Cys-212, His-237, and Glu-241. The 'KMSKS' region signature appears at 268–272; it reads KMSKS. Lys-271 lines the ATP pocket.

This sequence belongs to the class-I aminoacyl-tRNA synthetase family. In terms of assembly, monomer. Requires Zn(2+) as cofactor.

It is found in the cytoplasm. It catalyses the reaction tRNA(Cys) + L-cysteine + ATP = L-cysteinyl-tRNA(Cys) + AMP + diphosphate. The chain is Cysteine--tRNA ligase from Corynebacterium glutamicum (strain ATCC 13032 / DSM 20300 / JCM 1318 / BCRC 11384 / CCUG 27702 / LMG 3730 / NBRC 12168 / NCIMB 10025 / NRRL B-2784 / 534).